A 304-amino-acid chain; its full sequence is Opsin-1 (304 aa).

The Extracellular segment spans residues 1 to 45; the sequence is MIHPEQVADMLRPTTSTTSSHVPGPVPTVVPTPTEYQTLGETGHR. A helical membrane pass occupies residues 46-66; that stretch reads TLWVTFALMVLSSGIFALLSW. The chain crosses the membrane as a helical span at residues 74–94; sequence LFHVITTLITVVASLSYFAMA. Residues 129–149 traverse the membrane as a helical segment; that stretch reads YVDWALTTPLLLLELCLLAGV. A helical transmembrane segment spans residues 154-174; that stretch reads TLMAIVADVIMVLCGLFAALG. The helical transmembrane segment at 183–203 threads the bilayer; sequence WGWYTIGCFSYLFVIWHVALH. The helical transmembrane segment at 219–239 threads the bilayer; that stretch reads FTGLAVFALLLWTAYPIIWGI. A helical membrane pass occupies residues 252–272; it reads ILIYTVLDLLAKPVFGFWLLL. At Lys263 the chain carries N6-(retinylidene)lysine. Residues 273–304 are Cytoplasmic-facing; the sequence is SHRAMPETNIDLPGYWSHGLATEGRIRIGEED.

Belongs to the archaeal/bacterial/fungal opsin family. Post-translationally, binds all-trans retinal via a protonated Schiff base linkage.

It is found in the membrane. Functionally, could facilitate a sensory photoresponse. This Neurospora crassa (strain ATCC 24698 / 74-OR23-1A / CBS 708.71 / DSM 1257 / FGSC 987) protein is Opsin-1 (nop-1).